Consider the following 334-residue polypeptide: Porphobilinogen deaminase (334 aa).

C250 is modified (S-(dipyrrolylmethanemethyl)cysteine).

This sequence belongs to the HMBS family. In terms of assembly, monomer. Dipyrromethane serves as cofactor.

The catalysed reaction is 4 porphobilinogen + H2O = hydroxymethylbilane + 4 NH4(+). Its pathway is porphyrin-containing compound metabolism; protoporphyrin-IX biosynthesis; coproporphyrinogen-III from 5-aminolevulinate: step 2/4. In terms of biological role, tetrapolymerization of the monopyrrole PBG into the hydroxymethylbilane pre-uroporphyrinogen in several discrete steps. The chain is Porphobilinogen deaminase from Cutibacterium acnes (strain DSM 16379 / KPA171202) (Propionibacterium acnes).